A 288-amino-acid chain; its full sequence is Acetylglutamate kinase (288 aa).

Residues 73-74 (GG), Arg-95, and Asn-186 each bind substrate.

It belongs to the acetylglutamate kinase family. ArgB subfamily.

The protein localises to the cytoplasm. It catalyses the reaction N-acetyl-L-glutamate + ATP = N-acetyl-L-glutamyl 5-phosphate + ADP. Its pathway is amino-acid biosynthesis; L-arginine biosynthesis; N(2)-acetyl-L-ornithine from L-glutamate: step 2/4. Its function is as follows. Catalyzes the ATP-dependent phosphorylation of N-acetyl-L-glutamate. This chain is Acetylglutamate kinase, found in Pelagibacter ubique (strain HTCC1062).